A 243-amino-acid chain; its full sequence is 3-deoxy-manno-octulosonate cytidylyltransferase (243 aa).

It belongs to the KdsB family.

It is found in the cytoplasm. It carries out the reaction 3-deoxy-alpha-D-manno-oct-2-ulosonate + CTP = CMP-3-deoxy-beta-D-manno-octulosonate + diphosphate. It participates in nucleotide-sugar biosynthesis; CMP-3-deoxy-D-manno-octulosonate biosynthesis; CMP-3-deoxy-D-manno-octulosonate from 3-deoxy-D-manno-octulosonate and CTP: step 1/1. It functions in the pathway bacterial outer membrane biogenesis; lipopolysaccharide biosynthesis. Its function is as follows. Activates KDO (a required 8-carbon sugar) for incorporation into bacterial lipopolysaccharide in Gram-negative bacteria. The protein is 3-deoxy-manno-octulosonate cytidylyltransferase of Helicobacter pylori (strain ATCC 700392 / 26695) (Campylobacter pylori).